We begin with the raw amino-acid sequence, 441 residues long: Glutamate--tRNA ligase 2 (441 aa).

The 'HIGH' region signature appears at 9–19; it reads PSPTGYIHVGN. A 'KMSKS' region motif is present at residues 239 to 243; it reads ALSKR. Lys242 serves as a coordination point for ATP.

This sequence belongs to the class-I aminoacyl-tRNA synthetase family. Glutamate--tRNA ligase type 1 subfamily. Monomer.

The protein resides in the cytoplasm. It carries out the reaction tRNA(Glu) + L-glutamate + ATP = L-glutamyl-tRNA(Glu) + AMP + diphosphate. In terms of biological role, catalyzes the attachment of glutamate to tRNA(Glu) in a two-step reaction: glutamate is first activated by ATP to form Glu-AMP and then transferred to the acceptor end of tRNA(Glu). The chain is Glutamate--tRNA ligase 2 from Cereibacter sphaeroides (strain ATCC 17023 / DSM 158 / JCM 6121 / CCUG 31486 / LMG 2827 / NBRC 12203 / NCIMB 8253 / ATH 2.4.1.) (Rhodobacter sphaeroides).